The primary structure comprises 565 residues: Probable transcription factor lepB (565 aa).

The fungal specific transcription factor domain stretch occupies residues 52–259 (KRYAEDVTYL…PRNLDDRDLD (208 aa)).

It localises to the nucleus. Probable transcription factor; part of the gene cluster 23 that mediates the biosynthesis of a family of 2-pyridones known as leporins. The protein is Probable transcription factor lepB of Aspergillus flavus (strain ATCC 200026 / FGSC A1120 / IAM 13836 / NRRL 3357 / JCM 12722 / SRRC 167).